Consider the following 208-residue polypeptide: Ribonuclease HII (208 aa).

The 190-residue stretch at 12–201 (ELVAGVDEVG…VRALLEPVAV (190 aa)) folds into the RNase H type-2 domain. Positions 18, 19, and 110 each coordinate a divalent metal cation.

It belongs to the RNase HII family. Mn(2+) is required as a cofactor. It depends on Mg(2+) as a cofactor.

The protein resides in the cytoplasm. The catalysed reaction is Endonucleolytic cleavage to 5'-phosphomonoester.. Endonuclease that specifically degrades the RNA of RNA-DNA hybrids. This is Ribonuclease HII from Ectopseudomonas mendocina (strain ymp) (Pseudomonas mendocina).